A 251-amino-acid chain; its full sequence is Gamma-glutamyl peptidase 5 (251 aa).

One can recognise a Glutamine amidotransferase type-1 domain in the interval 17 to 214 (STFVKKAYGG…IDRVVNLKLM (198 aa)). The Nucleophile role is filled by C101. Residues H193 and E195 contribute to the active site.

The protein belongs to the peptidase C26 family.

It localises to the cytoplasm. The protein localises to the cytosol. The protein operates within secondary metabolite biosynthesis. Functionally, involved in glucosinolate biosynthesis. Hydrolyzes the gamma-glutamyl peptide bond of several glutathione (GSH) conjugates to produce Cys-Gly conjugates related to glucosinolates. The gamma-Glu-Cys-Gly-GSH conjugates are the sulfur-donating molecule in glucosinolate biosynthesis. The chain is Gamma-glutamyl peptidase 5 from Arabidopsis thaliana (Mouse-ear cress).